We begin with the raw amino-acid sequence, 354 residues long: MGSIALFLLVALIKVVLVIFVLLTAVAYTVWLERKVVGRMQNRWGPTRVGPFGLLQPLADGLKFILKEDLLPPHVNKPLYILAPMLAVAMALLSISIVPFGGTLTIGHITTPLQITGIMGANGQPVDINIGLLIILGVTSIGVYGIALAGWSSNSKYSLLGSLRASAQMVSYEVSLGLSLVGVLLLSGSFSLREIVRLQQGGFWNWNIFGGFQFIAFFIYLTSAYAETNRIPFDLPEAETELVAGYHTEYSSMKFAMFFMAEYANMVTVACIASILFLGGWSGPVPGFLPPILQSLVPVFWFCLRIFAFLFIYIWVRGTLPRFRYDQLMAFSWKFLLPLSIANIMVTALFVALK.

The next 8 helical transmembrane spans lie at 4–24 (IALFLLVALIKVVLVIFVLLT), 81–101 (ILAPMLAVAMALLSISIVPFG), 130–150 (IGLLIILGVTSIGVYGIALAG), 170–190 (VSYEVSLGLSLVGVLLLSGSF), 201–221 (GGFWNWNIFGGFQFIAFFIYL), 269–289 (VACIASILFLGGWSGPVPGFL), 296–316 (LVPVFWFCLRIFAFLFIYIWV), and 333–353 (WKFLLPLSIANIMVTALFVAL).

It belongs to the complex I subunit 1 family. As to quaternary structure, NDH-1 is composed of 14 different subunits. Subunits NuoA, H, J, K, L, M, N constitute the membrane sector of the complex.

The protein resides in the cell inner membrane. It carries out the reaction a quinone + NADH + 5 H(+)(in) = a quinol + NAD(+) + 4 H(+)(out). In terms of biological role, NDH-1 shuttles electrons from NADH, via FMN and iron-sulfur (Fe-S) centers, to quinones in the respiratory chain. The immediate electron acceptor for the enzyme in this species is believed to be ubiquinone. Couples the redox reaction to proton translocation (for every two electrons transferred, four hydrogen ions are translocated across the cytoplasmic membrane), and thus conserves the redox energy in a proton gradient. This subunit may bind ubiquinone. The sequence is that of NADH-quinone oxidoreductase subunit H 2 from Koribacter versatilis (strain Ellin345).